We begin with the raw amino-acid sequence, 161 residues long: Photosystem II extrinsic protein V (161 aa).

The N-terminal stretch at 1–25 (MKKFFISVVFIVLLTFTTFINSATA) is a signal peptide. Residues Cys-61, Cys-64, His-65, and His-116 each coordinate heme c.

Belongs to the cytochrome c family. PsbV subfamily. In terms of assembly, PSII is composed of 1 copy each of membrane proteins PsbA, PsbB, PsbC, PsbD, PsbE, PsbF, PsbH, PsbI, PsbJ, PsbK, PsbL, PsbM, PsbT, PsbX, PsbY, PsbZ, Psb30/Ycf12, peripheral proteins PsbO, CyanoQ (PsbQ), PsbU, PsbV and a large number of cofactors. It forms dimeric complexes. Heme c serves as cofactor.

Its subcellular location is the cellular thylakoid membrane. One of the extrinsic, lumenal subunits of photosystem II (PSII). PSII is a light-driven water plastoquinone oxidoreductase, using light energy to abstract electrons from H(2)O, generating a proton gradient subsequently used for ATP formation. The extrinsic proteins stabilize the structure of photosystem II oxygen-evolving complex (OEC), the ion environment of oxygen evolution and protect the OEC against heat-induced inactivation. Low-potential cytochrome c that plays a role in the OEC of PSII. The chain is Photosystem II extrinsic protein V from Trichodesmium erythraeum (strain IMS101).